The following is a 454-amino-acid chain: Bifunctional protein GlmU (454 aa).

The pyrophosphorylase stretch occupies residues 1 to 226; it reads MALNVVILAA…AVEVEGANNR (226 aa). UDP-N-acetyl-alpha-D-glucosamine is bound by residues 8–11, Lys22, Gln73, 78–79, 100–102, Gly137, Glu151, Asn166, and Asn224; these read LAAG, GT, and YGD. Residue Asp102 coordinates Mg(2+). A Mg(2+)-binding site is contributed by Asn224. The tract at residues 227-247 is linker; it reads VQLAQLERAYQARAAEKLMLE. Positions 248 to 454 are N-acetyltransferase; the sequence is GANLRDPARI…GWPRPVKLKK (207 aa). The UDP-N-acetyl-alpha-D-glucosamine site is built by Arg330 and Lys348. His360 functions as the Proton acceptor in the catalytic mechanism. Positions 363 and 374 each coordinate UDP-N-acetyl-alpha-D-glucosamine. Acetyl-CoA is bound by residues Ala377, 383-384, Ser402, Ala420, and Arg437; that span reads NY.

The protein in the N-terminal section; belongs to the N-acetylglucosamine-1-phosphate uridyltransferase family. In the C-terminal section; belongs to the transferase hexapeptide repeat family. As to quaternary structure, homotrimer. Mg(2+) serves as cofactor.

It localises to the cytoplasm. It carries out the reaction alpha-D-glucosamine 1-phosphate + acetyl-CoA = N-acetyl-alpha-D-glucosamine 1-phosphate + CoA + H(+). It catalyses the reaction N-acetyl-alpha-D-glucosamine 1-phosphate + UTP + H(+) = UDP-N-acetyl-alpha-D-glucosamine + diphosphate. Its pathway is nucleotide-sugar biosynthesis; UDP-N-acetyl-alpha-D-glucosamine biosynthesis; N-acetyl-alpha-D-glucosamine 1-phosphate from alpha-D-glucosamine 6-phosphate (route II): step 2/2. It participates in nucleotide-sugar biosynthesis; UDP-N-acetyl-alpha-D-glucosamine biosynthesis; UDP-N-acetyl-alpha-D-glucosamine from N-acetyl-alpha-D-glucosamine 1-phosphate: step 1/1. The protein operates within bacterial outer membrane biogenesis; LPS lipid A biosynthesis. Its function is as follows. Catalyzes the last two sequential reactions in the de novo biosynthetic pathway for UDP-N-acetylglucosamine (UDP-GlcNAc). The C-terminal domain catalyzes the transfer of acetyl group from acetyl coenzyme A to glucosamine-1-phosphate (GlcN-1-P) to produce N-acetylglucosamine-1-phosphate (GlcNAc-1-P), which is converted into UDP-GlcNAc by the transfer of uridine 5-monophosphate (from uridine 5-triphosphate), a reaction catalyzed by the N-terminal domain. This is Bifunctional protein GlmU from Shewanella pealeana (strain ATCC 700345 / ANG-SQ1).